The sequence spans 255 residues: 1-(5-phosphoribosyl)-5-[(5-phosphoribosylamino)methylideneamino] imidazole-4-carboxamide isomerase (255 aa).

The active-site Proton acceptor is aspartate 8. Aspartate 129 functions as the Proton donor in the catalytic mechanism.

Belongs to the HisA/HisF family.

It is found in the cytoplasm. The catalysed reaction is 1-(5-phospho-beta-D-ribosyl)-5-[(5-phospho-beta-D-ribosylamino)methylideneamino]imidazole-4-carboxamide = 5-[(5-phospho-1-deoxy-D-ribulos-1-ylimino)methylamino]-1-(5-phospho-beta-D-ribosyl)imidazole-4-carboxamide. It participates in amino-acid biosynthesis; L-histidine biosynthesis; L-histidine from 5-phospho-alpha-D-ribose 1-diphosphate: step 4/9. The polypeptide is 1-(5-phosphoribosyl)-5-[(5-phosphoribosylamino)methylideneamino] imidazole-4-carboxamide isomerase (Parasynechococcus marenigrum (strain WH8102)).